The following is a 400-amino-acid chain: Acetate kinase (400 aa).

Residue asparagine 8 coordinates Mg(2+). Residue lysine 15 participates in ATP binding. Arginine 89 provides a ligand contact to substrate. Catalysis depends on aspartate 146, which acts as the Proton donor/acceptor. Residues 206–210 (HVGNG), 283–285 (DMR), and 331–335 (GMGEN) contribute to the ATP site. Position 383 (glutamate 383) interacts with Mg(2+).

It belongs to the acetokinase family. In terms of assembly, homodimer. Mg(2+) is required as a cofactor. It depends on Mn(2+) as a cofactor.

It is found in the cytoplasm. It catalyses the reaction acetate + ATP = acetyl phosphate + ADP. It functions in the pathway metabolic intermediate biosynthesis; acetyl-CoA biosynthesis; acetyl-CoA from acetate: step 1/2. Catalyzes the formation of acetyl phosphate from acetate and ATP. Can also catalyze the reverse reaction. The protein is Acetate kinase of Streptococcus equi subsp. zooepidemicus (strain MGCS10565).